Consider the following 828-residue polypeptide: Periplasmic nitrate reductase (828 aa).

A signal peptide (tat-type signal) is located at residues 1–31 (MKLSRRHFMKANAVAAAAAVAGITIPIAVRA). The region spanning 39-95 (IHWDKAPCRFCGVGCGVLVGTQNGRIVASQGDPEAPVNRGLNCIKGYFLPKIMYGQD) is the 4Fe-4S Mo/W bis-MGD-type domain. [4Fe-4S] cluster-binding residues include Cys-46, Cys-49, Cys-53, and Cys-81. Mo-bis(molybdopterin guanine dinucleotide) is bound by residues Lys-83, Gln-150, Asn-175, Cys-179, 212–219 (WGSNMAEM), 243–247 (STYQH), 262–264 (QTD), Met-372, Gln-376, Asn-482, 508–509 (SD), Lys-531, Asp-558, and 718–727 (TGRVLEHWHT). Phe-794 is a substrate binding site. The Mo-bis(molybdopterin guanine dinucleotide) site is built by Asn-802 and Lys-819.

It belongs to the prokaryotic molybdopterin-containing oxidoreductase family. NasA/NapA/NarB subfamily. In terms of assembly, component of the periplasmic nitrate reductase NapAB complex composed of NapA and NapB. The cofactor is [4Fe-4S] cluster. Mo-bis(molybdopterin guanine dinucleotide) is required as a cofactor. Predicted to be exported by the Tat system. The position of the signal peptide cleavage has not been experimentally proven.

The protein localises to the periplasm. It carries out the reaction 2 Fe(II)-[cytochrome] + nitrate + 2 H(+) = 2 Fe(III)-[cytochrome] + nitrite + H2O. Its function is as follows. Catalytic subunit of the periplasmic nitrate reductase complex NapAB. Receives electrons from NapB and catalyzes the reduction of nitrate to nitrite. This chain is Periplasmic nitrate reductase, found in Pectobacterium atrosepticum (strain SCRI 1043 / ATCC BAA-672) (Erwinia carotovora subsp. atroseptica).